Here is a 501-residue protein sequence, read N- to C-terminus: Lysine--tRNA ligase (501 aa).

Residues Glu404 and Glu411 each coordinate Mg(2+).

The protein belongs to the class-II aminoacyl-tRNA synthetase family. As to quaternary structure, homodimer. The cofactor is Mg(2+).

It is found in the cytoplasm. The enzyme catalyses tRNA(Lys) + L-lysine + ATP = L-lysyl-tRNA(Lys) + AMP + diphosphate. In Campylobacter jejuni subsp. jejuni serotype O:6 (strain 81116 / NCTC 11828), this protein is Lysine--tRNA ligase.